An 83-amino-acid chain; its full sequence is Exodeoxyribonuclease 7 small subunit (83 aa).

Belongs to the XseB family. As to quaternary structure, heterooligomer composed of large and small subunits.

It localises to the cytoplasm. It catalyses the reaction Exonucleolytic cleavage in either 5'- to 3'- or 3'- to 5'-direction to yield nucleoside 5'-phosphates.. In terms of biological role, bidirectionally degrades single-stranded DNA into large acid-insoluble oligonucleotides, which are then degraded further into small acid-soluble oligonucleotides. In Nitrobacter winogradskyi (strain ATCC 25391 / DSM 10237 / CIP 104748 / NCIMB 11846 / Nb-255), this protein is Exodeoxyribonuclease 7 small subunit.